A 357-amino-acid polypeptide reads, in one-letter code: Peptide chain release factor 1 (357 aa).

Gln-236 carries the post-translational modification N5-methylglutamine.

The protein belongs to the prokaryotic/mitochondrial release factor family. Methylated by PrmC. Methylation increases the termination efficiency of RF1.

Its subcellular location is the cytoplasm. In terms of biological role, peptide chain release factor 1 directs the termination of translation in response to the peptide chain termination codons UAG and UAA. This chain is Peptide chain release factor 1, found in Mycobacterium marinum (strain ATCC BAA-535 / M).